Consider the following 79-residue polypeptide: Small ribosomal subunit protein eS17 (79 aa).

This sequence belongs to the eukaryotic ribosomal protein eS17 family.

This Saccharolobus islandicus (strain Y.N.15.51 / Yellowstone #2) (Sulfolobus islandicus) protein is Small ribosomal subunit protein eS17.